Reading from the N-terminus, the 619-residue chain is Replication restart protein PriA (619 aa).

Positions Leu-119–Gly-285 constitute a Helicase ATP-binding domain. Gly-132–Thr-139 provides a ligand contact to ATP. The DEAH box motif lies at Asp-228–His-231. Positions 336, 339, 345, 348, 363, 366, 376, and 379 each coordinate Zn(2+). One can recognise a Helicase C-terminal domain in the interval Pro-371–Cys-532.

It belongs to the helicase family. PriA subfamily. Component of the replication restart primosome. It depends on Zn(2+) as a cofactor.

The catalysed reaction is Couples ATP hydrolysis with the unwinding of duplex DNA by translocating in the 3'-5' direction.. It catalyses the reaction ATP + H2O = ADP + phosphate + H(+). Initiates the restart of stalled replication forks, which reloads the replicative helicase on sites other than the origin of replication. Recognizes and binds to abandoned replication forks and remodels them to uncover a helicase loading site. Promotes assembly of the primosome at these replication forks. Functionally, important for survival of the bacteria in host cells. The protein is Replication restart protein PriA of Helicobacter pylori (strain ATCC 700392 / 26695) (Campylobacter pylori).